The chain runs to 111 residues: Small ribosomal subunit protein bS16 (111 aa).

The protein belongs to the bacterial ribosomal protein bS16 family.

The protein is Small ribosomal subunit protein bS16 of Rickettsia bellii (strain OSU 85-389).